Reading from the N-terminus, the 96-residue chain is Small ribosomal subunit protein bS21 (96 aa).

Residues Arg-52 to Ala-96 form a disordered region. A compositionally biased stretch (low complexity) spans Ala-69–Ala-96.

The protein belongs to the bacterial ribosomal protein bS21 family.

The sequence is that of Small ribosomal subunit protein bS21 from Methylobacterium nodulans (strain LMG 21967 / CNCM I-2342 / ORS 2060).